The primary structure comprises 174 residues: Shikimate kinase 2 (174 aa).

G12–T17 is a binding site for ATP. Mg(2+) contacts are provided by T16 and D32. Residues D34, R58, and G79 each coordinate substrate. The tract at residues Q112–K126 is LID domain. R120 contacts ATP. R139 contributes to the substrate binding site.

This sequence belongs to the shikimate kinase family. AroL subfamily. As to quaternary structure, monomer. Requires Mg(2+) as cofactor.

Its subcellular location is the cytoplasm. It carries out the reaction shikimate + ATP = 3-phosphoshikimate + ADP + H(+). Its pathway is metabolic intermediate biosynthesis; chorismate biosynthesis; chorismate from D-erythrose 4-phosphate and phosphoenolpyruvate: step 5/7. Catalyzes the specific phosphorylation of the 3-hydroxyl group of shikimic acid using ATP as a cosubstrate. This chain is Shikimate kinase 2, found in Shigella boydii serotype 4 (strain Sb227).